The sequence spans 69 residues: uncharacterized protein (69 aa).

2 consecutive transmembrane segments (helical) span residues 15 to 35 (LIIGLLCVIGIVMLNGLICYV) and 36 to 56 (LYIIAVPSLLYGIGAFIIPKT).

It is found in the cell membrane. This is an uncharacterized protein from Methanocaldococcus jannaschii (strain ATCC 43067 / DSM 2661 / JAL-1 / JCM 10045 / NBRC 100440) (Methanococcus jannaschii).